Reading from the N-terminus, the 262-residue chain is tRNA pseudouridine synthase A (262 aa).

Catalysis depends on Asp-51, which acts as the Nucleophile. A substrate-binding site is contributed by Tyr-109.

This sequence belongs to the tRNA pseudouridine synthase TruA family. As to quaternary structure, homodimer.

The enzyme catalyses uridine(38/39/40) in tRNA = pseudouridine(38/39/40) in tRNA. Functionally, formation of pseudouridine at positions 38, 39 and 40 in the anticodon stem and loop of transfer RNAs. The protein is tRNA pseudouridine synthase A of Actinobacillus pleuropneumoniae serotype 5b (strain L20).